Reading from the N-terminus, the 189-residue chain is MYLVVGLGNIGKEYKKTRHNIGFDVVDIIAEKYNIEINRQKFKGSYGEGRIGNEKIILLKPSTYMNLSGESVIEAANFYKIDKENIIVIYDDMSIDIGKLRVRGKGSAGGHNGIKNIIQHLNSDIFPRVRVGIGQPDENVVNYVLGKFSKDQREIIDKVLAMSAKACISIVEDGVTEAMNKYNGVKIEV.

Tyr14 lines the tRNA pocket. The Proton acceptor role is filled by His19. 3 residues coordinate tRNA: Tyr64, Asn66, and Asn112.

It belongs to the PTH family. As to quaternary structure, monomer.

Its subcellular location is the cytoplasm. It catalyses the reaction an N-acyl-L-alpha-aminoacyl-tRNA + H2O = an N-acyl-L-amino acid + a tRNA + H(+). In terms of biological role, hydrolyzes ribosome-free peptidyl-tRNAs (with 1 or more amino acids incorporated), which drop off the ribosome during protein synthesis, or as a result of ribosome stalling. Functionally, catalyzes the release of premature peptidyl moieties from peptidyl-tRNA molecules trapped in stalled 50S ribosomal subunits, and thus maintains levels of free tRNAs and 50S ribosomes. This Clostridium botulinum (strain Okra / Type B1) protein is Peptidyl-tRNA hydrolase.